Here is a 209-residue protein sequence, read N- to C-terminus: Outer-membrane lipoprotein carrier protein (209 aa).

The first 21 residues, 1–21 (MHRQLRYAVLATALFASTAFA), serve as a signal peptide directing secretion.

This sequence belongs to the LolA family. Monomer.

It is found in the periplasm. Participates in the translocation of lipoproteins from the inner membrane to the outer membrane. Only forms a complex with a lipoprotein if the residue after the N-terminal Cys is not an aspartate (The Asp acts as a targeting signal to indicate that the lipoprotein should stay in the inner membrane). The chain is Outer-membrane lipoprotein carrier protein from Xanthomonas axonopodis pv. citri (strain 306).